The chain runs to 165 residues: MDYQNNVSEERVAEMIWDAVSEGATLKDVHGIPQDMMDGLYAHAYEFYNQGRLDEAETFFRFLCIYDFYNPDYTMGLAAVCQLKKQFQKACDLYAVAFTLLKNDYRPVFFTGQCQLLMRKAAKARQCFELVNERTEDESLRAKALVYLEALKTAETEQHSEQEKE.

The protein belongs to the LcrH/SycD chaperone family. In terms of assembly, dimer or higher-order oligomers.

It localises to the cytoplasm. Functionally, type III secretion-associated chaperone required for SipB and SipC stabilization. Prevents premature association of SipB with SipC, which may lead to their targeting for degradation. Along with InvF, required for transcription activation of sigDE (sopB pipC), sicAsipBCDA, and sopE. In Salmonella dublin, this protein is Chaperone protein SicA (sicA).